The sequence spans 635 residues: Threonine--tRNA ligase (635 aa).

In terms of domain architecture, TGS spans 1–61 (MINISFPDGS…DNDCKLRILT (61 aa)). The tract at residues 242 to 533 (DHRKLGRELD…LIEEYAGRFP (292 aa)) is catalytic. Positions 333, 384, and 510 each coordinate Zn(2+).

This sequence belongs to the class-II aminoacyl-tRNA synthetase family. In terms of assembly, homodimer. Zn(2+) serves as cofactor.

The protein localises to the cytoplasm. It carries out the reaction tRNA(Thr) + L-threonine + ATP = L-threonyl-tRNA(Thr) + AMP + diphosphate + H(+). Functionally, catalyzes the attachment of threonine to tRNA(Thr) in a two-step reaction: L-threonine is first activated by ATP to form Thr-AMP and then transferred to the acceptor end of tRNA(Thr). Also edits incorrectly charged L-seryl-tRNA(Thr). The protein is Threonine--tRNA ligase of Rickettsia africae (strain ESF-5).